The chain runs to 525 residues: WD repeat-containing protein JIP5 (525 aa).

WD repeat units lie at residues 28–69 (VFDE…RILN), 121–160 (RHKG…VMKK), 211–251 (HNGD…ESDA), 270–310 (QEDE…LVDQ), and 358–398 (RKHS…DDEE). The tract at residues 396–525 (DEEGKINESY…EHGIRKFEGL (130 aa)) is disordered. Acidic residues predominate over residues 410-424 (SDNDNGFDSDADSNS). A compositionally biased stretch (low complexity) spans 425–435 (DSESVSSSDVD). Residues 463-484 (SKDELLAELEKDLQSSDEDSKH) are compositionally biased toward basic and acidic residues. A compositionally biased stretch (basic residues) spans 485 to 501 (YTKRTKSTQPKKLKKQK). A compositionally biased stretch (basic and acidic residues) spans 513–525 (QKHEHGIRKFEGL).

Belongs to the WD repeat WDR55 family.

Its subcellular location is the nucleus. It is found in the nucleolus. The chain is WD repeat-containing protein JIP5 (JIP5) from Kluyveromyces lactis (strain ATCC 8585 / CBS 2359 / DSM 70799 / NBRC 1267 / NRRL Y-1140 / WM37) (Yeast).